The chain runs to 369 residues: 4-hydroxy-3-methylbut-2-en-1-yl diphosphate synthase (flavodoxin) (369 aa).

Residues C270, C273, C305, and E312 each coordinate [4Fe-4S] cluster.

Belongs to the IspG family. Requires [4Fe-4S] cluster as cofactor.

It catalyses the reaction (2E)-4-hydroxy-3-methylbut-2-enyl diphosphate + oxidized [flavodoxin] + H2O + 2 H(+) = 2-C-methyl-D-erythritol 2,4-cyclic diphosphate + reduced [flavodoxin]. Its pathway is isoprenoid biosynthesis; isopentenyl diphosphate biosynthesis via DXP pathway; isopentenyl diphosphate from 1-deoxy-D-xylulose 5-phosphate: step 5/6. Functionally, converts 2C-methyl-D-erythritol 2,4-cyclodiphosphate (ME-2,4cPP) into 1-hydroxy-2-methyl-2-(E)-butenyl 4-diphosphate. The polypeptide is 4-hydroxy-3-methylbut-2-en-1-yl diphosphate synthase (flavodoxin) (Pseudomonas entomophila (strain L48)).